The following is a 467-amino-acid chain: Argininosuccinate lyase (467 aa).

This sequence belongs to the lyase 1 family. Argininosuccinate lyase subfamily.

The protein localises to the cytoplasm. The catalysed reaction is 2-(N(omega)-L-arginino)succinate = fumarate + L-arginine. It participates in amino-acid biosynthesis; L-arginine biosynthesis; L-arginine from L-ornithine and carbamoyl phosphate: step 3/3. This is Argininosuccinate lyase from Allorhizobium ampelinum (strain ATCC BAA-846 / DSM 112012 / S4) (Agrobacterium vitis (strain S4)).